The sequence spans 215 residues: Cytochrome b6 (215 aa).

Residues 32–52 form a helical membrane-spanning segment; that stretch reads IFYCLGGITLTCFLVQVATGF. Position 35 (Cys35) interacts with heme c. Heme b is bound by residues His86 and His100. A run of 3 helical transmembrane segments spans residues 90-110, 116-136, and 186-206; these read ASMM…TGGF, LTWV…VTGY, and LHTF…FLMI. Residues His187 and His202 each contribute to the heme b site.

It belongs to the cytochrome b family. PetB subfamily. As to quaternary structure, the 4 large subunits of the cytochrome b6-f complex are cytochrome b6, subunit IV (17 kDa polypeptide, PetD), cytochrome f and the Rieske protein, while the 4 small subunits are PetG, PetL, PetM and PetN. The complex functions as a dimer. The cofactor is heme b. It depends on heme c as a cofactor.

It localises to the plastid. Its subcellular location is the chloroplast thylakoid membrane. Functionally, component of the cytochrome b6-f complex, which mediates electron transfer between photosystem II (PSII) and photosystem I (PSI), cyclic electron flow around PSI, and state transitions. The protein is Cytochrome b6 of Gossypium barbadense (Sea Island cotton).